The primary structure comprises 604 residues: Aspartate--tRNA(Asp/Asn) ligase (604 aa).

Glu174 is a binding site for L-aspartate. Positions 198–201 (QLYK) are aspartate. Arg220 is a binding site for L-aspartate. Residues 220–222 (RDE) and Gln229 contribute to the ATP site. Residue His460 participates in L-aspartate binding. Residue Glu494 coordinates ATP. Position 501 (Arg501) interacts with L-aspartate. 546 to 549 (GLDR) is an ATP binding site.

It belongs to the class-II aminoacyl-tRNA synthetase family. Type 1 subfamily. In terms of assembly, homodimer.

The protein localises to the cytoplasm. It carries out the reaction tRNA(Asx) + L-aspartate + ATP = L-aspartyl-tRNA(Asx) + AMP + diphosphate. Functionally, aspartyl-tRNA synthetase with relaxed tRNA specificity since it is able to aspartylate not only its cognate tRNA(Asp) but also tRNA(Asn). Reaction proceeds in two steps: L-aspartate is first activated by ATP to form Asp-AMP and then transferred to the acceptor end of tRNA(Asp/Asn). The chain is Aspartate--tRNA(Asp/Asn) ligase from Paracidovorax citrulli (strain AAC00-1) (Acidovorax citrulli).